The following is a 223-amino-acid chain: MKLHYVAVLTLAILMFLTWLPESLSCNKALCASDVSKCLIQELCQCRPGEGNCSCCKECMLCLGALWDECCDCVGMCNPRNYSDTPPTSKSTVEELHEPIPSLFRALTEGDTQLNWNIVSFPVAEELSHHENLVSFLETVNQPHHQNVSVPSNNVHAPYSSDKEHMCTVVYFDDCMSIHQCKISCESMGASKYRWFHNACCECIGPECIDYGSKTVKCMNCMF.

The first 25 residues, 1–25 (MKLHYVAVLTLAILMFLTWLPESLS), serve as a signal peptide directing secretion. 2 N-linked (GlcNAc...) asparagine glycosylation sites follow: asparagine 52 and asparagine 81.

This sequence belongs to the twisted gastrulation protein family. In terms of assembly, interacts with CHRD and BMP4. This interaction enhances CHRD/BMP4 complex formation. Interacts with BMP7.

It localises to the secreted. May be involved in dorsoventral axis formation. Seems to antagonize BMP signaling by forming ternary complexes with CHRD and BMPs, thereby preventing BMPs from binding to their receptors. In addition to the anti-BMP function, also has pro-BMP activity, partly mediated by cleavage and degradation of CHRD, which releases BMPs from ternary complexes. May be an important modulator of BMP-regulated cartilage development and chondrocyte differentiation. May play a role in thymocyte development. This is Twisted gastrulation protein homolog 1 (TWSG1) from Homo sapiens (Human).